A 264-amino-acid polypeptide reads, in one-letter code: Small ribosomal subunit protein eS1 (264 aa).

A disordered region spans residues 232–264 (HGEGGGSGKPSGDETGAKVERADGYEPPVQESV). Over residues 242 to 255 (SGDETGAKVERADG) the composition is skewed to basic and acidic residues.

The protein belongs to the eukaryotic ribosomal protein eS1 family. As to quaternary structure, component of the small ribosomal subunit. Mature ribosomes consist of a small (40S) and a large (60S) subunit. The 40S subunit contains about 33 different proteins and 1 molecule of RNA (18S). The 60S subunit contains about 49 different proteins and 3 molecules of RNA (28S, 5.8S and 5S). Part of the small subunit (SSU) processome, composed of more than 70 proteins and the RNA chaperone small nucleolar RNA (snoRNA) U3.

The protein localises to the cytoplasm. It is found in the nucleus. Its subcellular location is the nucleolus. Functionally, component of the small ribosomal subunit. The ribosome is a large ribonucleoprotein complex responsible for the synthesis of proteins in the cell. Part of the small subunit (SSU) processome, first precursor of the small eukaryotic ribosomal subunit. During the assembly of the SSU processome in the nucleolus, many ribosome biogenesis factors, an RNA chaperone and ribosomal proteins associate with the nascent pre-rRNA and work in concert to generate RNA folding, modifications, rearrangements and cleavage as well as targeted degradation of pre-ribosomal RNA by the RNA exosome. May play a role during erythropoiesis. This chain is Small ribosomal subunit protein eS1, found in Ophiophagus hannah (King cobra).